A 262-amino-acid polypeptide reads, in one-letter code: Hydroxyethylthiazole kinase (262 aa).

M50 is a binding site for substrate. R125 and T171 together coordinate ATP. G198 contacts substrate.

It belongs to the Thz kinase family. The cofactor is Mg(2+).

It carries out the reaction 5-(2-hydroxyethyl)-4-methylthiazole + ATP = 4-methyl-5-(2-phosphooxyethyl)-thiazole + ADP + H(+). It functions in the pathway cofactor biosynthesis; thiamine diphosphate biosynthesis; 4-methyl-5-(2-phosphoethyl)-thiazole from 5-(2-hydroxyethyl)-4-methylthiazole: step 1/1. Its function is as follows. Catalyzes the phosphorylation of the hydroxyl group of 4-methyl-5-beta-hydroxyethylthiazole (THZ). The sequence is that of Hydroxyethylthiazole kinase from Escherichia coli O45:K1 (strain S88 / ExPEC).